A 154-amino-acid chain; its full sequence is 3-dehydroquinate dehydratase (154 aa).

Residue tyrosine 23 is the Proton acceptor of the active site. Positions 74, 80, and 87 each coordinate substrate. Histidine 100 serves as the catalytic Proton donor. Residues 101–102 (LS) and arginine 111 contribute to the substrate site.

Belongs to the type-II 3-dehydroquinase family. Homododecamer.

The catalysed reaction is 3-dehydroquinate = 3-dehydroshikimate + H2O. The protein operates within metabolic intermediate biosynthesis; chorismate biosynthesis; chorismate from D-erythrose 4-phosphate and phosphoenolpyruvate: step 3/7. Functionally, catalyzes a trans-dehydration via an enolate intermediate. This is 3-dehydroquinate dehydratase from Actinobacillus pleuropneumoniae serotype 5b (strain L20).